Consider the following 423-residue polypeptide: Heat shock transcription factor, X-linked (423 aa).

Basic and acidic residues predominate over residues 1–25; that stretch reads MEDKRSLSMARCEERNSRGQDHGLE. 3 disordered regions span residues 1–56, 215–303, and 397–423; these read MEDK…STGS, KSAP…EGSQ, and PHSH…DQST. The DNA-binding element occupies 98–282; the sequence is PFPQKLWRLV…PATPVMVPDS (185 aa). K215 participates in a covalent cross-link: Glycyl lysine isopeptide (Lys-Gly) (interchain with G-Cter in SUMO1). The segment covering 243–254 has biased composition (polar residues); the sequence is HTSPNENDQVTP.

It belongs to the HSF family. As to expression, testis-specific.

The protein localises to the nucleus. The protein resides in the cytoplasm. The protein is Heat shock transcription factor, X-linked (HSFX1) of Homo sapiens (Human).